A 313-amino-acid polypeptide reads, in one-letter code: Probable WRKY transcription factor 41 (313 aa).

Positions 135–203 form a DNA-binding region, WRKY; sequence GLEGPHDDIF…YRGTHTCSQG (69 aa).

It belongs to the WRKY group III family.

The protein resides in the nucleus. Its function is as follows. Transcription factor. Interacts specifically with the W box (5'-(T)TGAC[CT]-3'), a frequently occurring elicitor-responsive cis-acting element. The sequence is that of Probable WRKY transcription factor 41 (WRKY41) from Arabidopsis thaliana (Mouse-ear cress).